Consider the following 419-residue polypeptide: Synaptosomal-associated protein 47 (419 aa).

T-SNARE coiled-coil homology domains lie at 109–171 (AANP…LTEL) and 356–418 (KDWP…MRKL).

Belongs to the SVAP1 family. In terms of assembly, associates with the BLOC-1 complex. Interacts with BLOC1S6. Forms a complex containing SNAP47, VAMP2 and STX1A.

It localises to the endomembrane system. The protein localises to the cytoplasm. It is found in the perinuclear region. Functionally, may play a role in intracellular membrane fusion. The chain is Synaptosomal-associated protein 47 (Snap47) from Rattus norvegicus (Rat).